The sequence spans 586 residues: MSGPEVEDHISQKYDIKKRLGKGAYGIVWKAIDRKSGEIVAVKKIFDAFRNRTDAQRTFREIMFLQEFGEHPNIIKLLNVIRAQNDKDIYLVFEHMETDLHAVIKKGNLLKDIHMRYILYQLLKATKFIHSGNVIHRDQKPSNILLDGDCLVKLCDFGLARSLYQIQEDVGNPALTEYVATRWYRAPEILLASNRYTKGVDMWSVGCILGEMLLGKPLFPGTSTINQIERIMSIIEPPTHEDIVSIKSEYGASVISRMSSKHKVPMAELFPASCPREALDLLSKLLVFNPGKRLTAEEALEHPYVSRFHSPAREPALDYDVILPVDDDIQLSVAEYRNKLYEMILERKMNIRRQKRESLKESVSSSANGAKDRQDTDTSKTPAPPAGTNPAPQPTSSTVPQRAAIAAPNQPPAQKDSTQQSPKIKAPSSNPITHSTTHGSTEDWRTSHNKKAGQQGAAGTTAQEVRKEVESRSRTAPIGRARSFSHSQQARAAATNSALIRKDAPPTGTVSVAAVSARLNQRTAPIQGRDPRSAPRFGRKMFQGKTNVESAGDPKATLHSYTQAYGTISKAALQNLPQQGGAFKGK.

The region spanning 14 to 305 is the Protein kinase domain; the sequence is YDIKKRLGKG…AEEALEHPYV (292 aa). Residues 20-28 and Lys43 contribute to the ATP site; that span reads LGKGAYGIV. Catalysis depends on Asp138, which acts as the Proton acceptor. Disordered stretches follow at residues 354 to 506 and 520 to 539; these read QKRE…DAPP and NQRT…RFGR. Over residues 382–393 the composition is skewed to pro residues; that stretch reads PAPPAGTNPAPQ. The span at 400-414 shows a compositional bias: low complexity; that stretch reads PQRAAIAAPNQPPAQ. A compositionally biased stretch (polar residues) spans 415–439; sequence KDSTQQSPKIKAPSSNPITHSTTHG. Positions 452-463 are enriched in low complexity; that stretch reads AGQQGAAGTTAQ. Positions 464 to 473 are enriched in basic and acidic residues; that stretch reads EVRKEVESRS. The segment covering 484–498 has biased composition (polar residues); that stretch reads FSHSQQARAAATNSA.

Interacts with dvl2.

Its subcellular location is the cytoplasm. The protein resides in the cytoskeleton. The protein localises to the cilium basal body. It is found in the cell projection. It localises to the cilium. Its subcellular location is the cell junction. The enzyme catalyses L-seryl-[protein] + ATP = O-phospho-L-seryl-[protein] + ADP + H(+). It carries out the reaction L-threonyl-[protein] + ATP = O-phospho-L-threonyl-[protein] + ADP + H(+). Atypical MAPK protein that regulates ciliogenesis by phosphorylating rcsd1 through its binding with dvl2. This Xenopus laevis (African clawed frog) protein is Mitogen-activated protein kinase 15.